We begin with the raw amino-acid sequence, 70 residues long: Large ribosomal subunit protein bL31 (70 aa).

Cys-16, Cys-18, Cys-37, and Cys-40 together coordinate Zn(2+).

The protein belongs to the bacterial ribosomal protein bL31 family. Type A subfamily. As to quaternary structure, part of the 50S ribosomal subunit. Requires Zn(2+) as cofactor.

Binds the 23S rRNA. In Ectopseudomonas mendocina (strain ymp) (Pseudomonas mendocina), this protein is Large ribosomal subunit protein bL31.